Here is a 630-residue protein sequence, read N- to C-terminus: Probable potassium transport system protein Kup (630 aa).

12 helical membrane-spanning segments follow: residues 17 to 37 (LAIA…LYSL), 51 to 71 (PSAI…VVGI), 105 to 125 (ITGL…GDAV), 144 to 164 (PQLS…LFWI), 175 to 195 (LFGP…IYHI), 218 to 238 (VLLA…AEAL), 255 to 275 (YVLV…LLLL), 283 to 303 (PFFL…STVA), 344 to 364 (IYVP…VIGF), 374 to 394 (YGIA…VVMV), 402 to 422 (LLVA…FGAN), and 428 to 448 (QGGW…MTWY).

The protein belongs to the HAK/KUP transporter (TC 2.A.72) family.

It localises to the cell inner membrane. The enzyme catalyses K(+)(in) + H(+)(in) = K(+)(out) + H(+)(out). In terms of biological role, transport of potassium into the cell. Likely operates as a K(+):H(+) symporter. This Burkholderia pseudomallei (strain K96243) protein is Probable potassium transport system protein Kup.